The chain runs to 309 residues: Homoserine O-acetyltransferase (309 aa).

The Acyl-thioester intermediate role is filled by Cys-142. 2 residues coordinate substrate: Lys-163 and Ser-192. His-235 serves as the catalytic Proton acceptor. The active site involves Glu-237. Arg-249 serves as a coordination point for substrate.

The protein belongs to the MetA family.

It localises to the cytoplasm. It catalyses the reaction L-homoserine + acetyl-CoA = O-acetyl-L-homoserine + CoA. Its pathway is amino-acid biosynthesis; L-methionine biosynthesis via de novo pathway; O-acetyl-L-homoserine from L-homoserine: step 1/1. Transfers an acetyl group from acetyl-CoA to L-homoserine, forming acetyl-L-homoserine. The protein is Homoserine O-acetyltransferase of Petrotoga mobilis (strain DSM 10674 / SJ95).